A 797-amino-acid polypeptide reads, in one-letter code: Plakophilin-3 (797 aa).

Residues 58–81 are disordered; sequence GQQSRHNGSAELDGSAESARGMPR. At R81 the chain carries Omega-N-methylarginine. Phosphoserine is present on residues S123, S180, and S183. Phosphotyrosine is present on Y195. Residues 219–228 show a composition bias toward low complexity; sequence ASSGSSRAGG. Positions 219–241 are disordered; sequence ASSGSSRAGGLDWPEATEGPPSR. S240 is modified (phosphoserine). T250 is subject to Phosphothreonine. The tract at residues 253–274 is disordered; the sequence is RFQSSHRSRGGTGSVSGAGLEP. R261 is subject to Omega-N-methylarginine. The interval 283 to 288 is required for interaction with SFN; the sequence is SLSLSL. Residues S285, S313, S314, and S331 each carry the phosphoserine modification. Residues 294-724 form a required for interaction with GSK3B region; that stretch reads LPDVRGLDSY…AEVLVNIIAV (431 aa). 8 ARM repeats span residues 305–348, 351–390, 393–432, 449–487, 491–536, 596–637, 645–684, and 689–730; these read GHRT…HRCY, AAAK…NLIY, VDNK…NLSS, TDLV…NLSS, ATRQ…NLSY, PKGL…NITA, VLSR…NLSR, and KDEM…NLVV. The segment at 516–797 is required for binding to PKP2 mRNA; the sequence is VGKCEDKSVE…GYRKEDFLGP (282 aa).

The protein belongs to the beta-catenin family. In terms of assembly, found in a complex composed of CDH1, RAP1A and PKP3; PKP3 acts as a scaffold protein within the complex, the complex is required for CDH1 localization to mature desmosome cell junctions. Interacts with FXR1; the interaction facilitates the binding of PKP3 to PKP2 mRNA. Interacts (via ARM repeats) with GSK3B; the interaction may be involved in PKP3 protein degradation. Interacts with hyperphosphorylated and hypophosphorylated RB1; the interaction inhibits RB1 interaction with and repression of the transcription factor E2F1, potentially via sequestering RB1 to the cytoplasm. Interacts with CDKN1A; the interaction sequesters CDKN1A to the cytoplasm thereby repressing its role as an inhibitor of CDK4- and CDK6-driven RB1 phosphorylation. Interacts (via N-terminus) with SFN; the interaction maintains the cytoplasmic pool of PKP3, facilitates PKP3 exchange at desmosomes and restricts PKP3 localization to existing desmosome cell junctions. Interacts (via N-terminus) with JUP; the interaction is required for PKP3 localization to desmosome cell-cell junctions. Phosphorylated at Ser-285 when localized to the cytoplasm, PKP3 at desmosome cell junctions is not phosphorylated. Phosphorylation at Try-195 by SRC is induced by reactive oxygen species and potentially acts as a release mechanism from desmosome cell-cell junctions. As to expression, expressed in all layers of the epidermis, but is most abundant in the basal layer (at protein level). Expressed in keratinocytes of the epidermis at birth (at protein level). Expressed in the anagen non-keratinized inner root sheath cuticle and hair cuticle (at protein level). Also expressed in the matrix, precursors of the inner root sheath and hair shaft lineages (at protein level). Expressed at apical membranes in the outer hair root sheath and basal layer keratinocytes (at protein level). Expressed in intestinal epithelial cells and lamina propria of the ileum (at protein level). Expressed in keratinocytes (at protein level).

The protein localises to the nucleus. It is found in the cell junction. The protein resides in the desmosome. Its subcellular location is the cytoplasm. It localises to the cell membrane. The protein localises to the adherens junction. Functionally, a component of desmosome cell-cell junctions which are required for positive regulation of cellular adhesion. Required for the localization of DSG2, DSP and PKP2 to mature desmosome junctions. May also play a role in the maintenance of DSG3 protein abundance in keratinocytes. Required for the formation of DSP-containing desmosome precursors in the cytoplasm during desmosome assembly. Also regulates the accumulation of CDH1 to mature desmosome junctions, via cAMP-dependent signaling and its interaction with activated RAP1A. Positively regulates the stabilization of PKP2 mRNA and therefore protein abundance, via its interaction with FXR1, may also regulate the protein abundance of DSP via the same mechanism. May also regulate the protein abundance of the desmosome component PKP1. Required for the organization of desmosome junctions at intercellular borders between basal keratinocytes of the epidermis, as a result plays a role in maintenance of the dermal barrier and regulation of the dermal inflammatory response. Required during epidermal keratinocyte differentiation for cell adherence at tricellular cell-cell contacts, via regulation of the timely formation of adherens junctions and desmosomes in a calcium-dependent manner, and may also play a role in the organization of the intracellular actin fiber belt. Acts as a negative regulator of the inflammatory response in hematopoietic cells of the skin and intestine, via modulation of proinflammatory cytokine production. Important for epithelial barrier maintenance in the intestine to reduce intestinal permeability, thereby plays a role in protection from intestinal-derived endotoxemia. Required for the development of hair follicles, via a role in the regulation of inner root sheaf length, correct alignment and anterior-posterior polarity of hair follicles. Promotes proliferation and cell-cycle G1/S phase transition of keratinocytes. Promotes E2F1-driven transcription of G1/S phase promoting genes by acting to release E2F1 from its inhibitory interaction with RB1, via sequestering RB1 and CDKN1A to the cytoplasm and thereby increasing CDK4- and CDK6-driven phosphorylation of RB1. May act as a scaffold protein to facilitate MAPK phosphorylation of RPS6KA protein family members and subsequently promote downstream EGFR signaling. May play a role in the positive regulation of transcription of Wnt-mediated TCF-responsive target genes. The chain is Plakophilin-3 (Pkp3) from Mus musculus (Mouse).